Consider the following 405-residue polypeptide: Serine/threonine-protein kinase 2 (405 aa).

The 352-residue stretch at 54 to 405 (NDDFYHISTG…IFSDWINGGN (352 aa)) folds into the Protein kinase domain. ATP contacts are provided by residues 60 to 68 (ISTGGYGIV) and Lys84. Asp274 (proton acceptor) is an active-site residue.

It belongs to the protein kinase superfamily. Ser/Thr protein kinase family. Poxviruses subfamily. Phosphorylated in vivo. Autophosphorylated in vitro.

The protein localises to the host endoplasmic reticulum. It localises to the host endoplasmic reticulum-Golgi intermediate compartment. It catalyses the reaction L-seryl-[protein] + ATP = O-phospho-L-seryl-[protein] + ADP + H(+). It carries out the reaction L-threonyl-[protein] + ATP = O-phospho-L-threonyl-[protein] + ADP + H(+). Its function is as follows. Essential serine-protein kinase involved in the early stage of virion morphogenesis. This Vaccinia virus (strain L-IVP) (VACV) protein is Serine/threonine-protein kinase 2 (OPG054).